We begin with the raw amino-acid sequence, 34 residues long: Photosystem II reaction center protein M (34 aa).

Residues 5 to 25 (ILAFIATALFILVPTAFLLII) traverse the membrane as a helical segment.

Belongs to the PsbM family. As to quaternary structure, PSII is composed of 1 copy each of membrane proteins PsbA, PsbB, PsbC, PsbD, PsbE, PsbF, PsbH, PsbI, PsbJ, PsbK, PsbL, PsbM, PsbT, PsbX, PsbY, PsbZ, Psb30/Ycf12, at least 3 peripheral proteins of the oxygen-evolving complex and a large number of cofactors. It forms dimeric complexes.

The protein resides in the plastid. It localises to the chloroplast thylakoid membrane. One of the components of the core complex of photosystem II (PSII). PSII is a light-driven water:plastoquinone oxidoreductase that uses light energy to abstract electrons from H(2)O, generating O(2) and a proton gradient subsequently used for ATP formation. It consists of a core antenna complex that captures photons, and an electron transfer chain that converts photonic excitation into a charge separation. This subunit is found at the monomer-monomer interface. This is Photosystem II reaction center protein M from Ceratophyllum demersum (Rigid hornwort).